Here is a 279-residue protein sequence, read N- to C-terminus: Putative pyruvate, phosphate dikinase regulatory protein (279 aa).

Residue 152–159 (GVSRTSKS) participates in ADP binding.

It belongs to the pyruvate, phosphate/water dikinase regulatory protein family. PDRP subfamily.

It catalyses the reaction N(tele)-phospho-L-histidyl/L-threonyl-[pyruvate, phosphate dikinase] + ADP = N(tele)-phospho-L-histidyl/O-phospho-L-threonyl-[pyruvate, phosphate dikinase] + AMP + H(+). It carries out the reaction N(tele)-phospho-L-histidyl/O-phospho-L-threonyl-[pyruvate, phosphate dikinase] + phosphate + H(+) = N(tele)-phospho-L-histidyl/L-threonyl-[pyruvate, phosphate dikinase] + diphosphate. In terms of biological role, bifunctional serine/threonine kinase and phosphorylase involved in the regulation of the pyruvate, phosphate dikinase (PPDK) by catalyzing its phosphorylation/dephosphorylation. This is Putative pyruvate, phosphate dikinase regulatory protein from Anaplasma marginale (strain St. Maries).